Reading from the N-terminus, the 181-residue chain is Oligoribonuclease (181 aa).

Residues 8 to 171 (LIWIDMEMTG…ADIYDSIEEL (164 aa)) enclose the Exonuclease domain. Y129 is a catalytic residue.

This sequence belongs to the oligoribonuclease family.

It localises to the cytoplasm. Functionally, 3'-to-5' exoribonuclease specific for small oligoribonucleotides. The protein is Oligoribonuclease of Nitrosomonas eutropha (strain DSM 101675 / C91 / Nm57).